The following is a 287-amino-acid chain: Cbb3-type cytochrome c oxidase subunit FixPc (287 aa).

The Cytoplasmic portion of the chain corresponds to 1 to 36 (MSEKHIDEFSGVETTGHEWDGIRELNNPMPRWWVWT). A helical transmembrane segment spans residues 37–57 (FYATIVWALGYAIAYPAIPMI). Residues 58 to 287 (TDATKGMLGF…IFVHSLGGGT (230 aa)) lie on the Periplasmic side of the membrane. Cytochrome c domains lie at 108 to 196 (FAIA…WGLT) and 203 to 284 (GLAE…HSLG). Positions 121, 124, 125, 173, 216, 219, 220, and 261 each coordinate heme c.

Belongs to the CcoP / FixP family. In terms of assembly, component of the cbb3-type cytochrome c oxidase at least composed of FixN, FixO, FixQ and FixP. Requires heme c as cofactor.

The protein localises to the cell inner membrane. It functions in the pathway energy metabolism; oxidative phosphorylation. In terms of biological role, C-type cytochrome. Part of the cbb3-type cytochrome c oxidase complex. FixP subunit is required for transferring electrons from donor cytochrome c via its heme groups to FixO subunit. From there, electrons are shuttled to the catalytic binuclear center of FixN subunit where oxygen reduction takes place. The complex also functions as a proton pump. This chain is Cbb3-type cytochrome c oxidase subunit FixPc, found in Rhizobium leguminosarum bv. viciae.